Reading from the N-terminus, the 306-residue chain is Ribonuclease HIII (306 aa).

In terms of domain architecture, RNase H type-2 spans 87–302 (WSVVGSDEVG…TKKAEALAKK (216 aa)). The a divalent metal cation site is built by Asp-93, Glu-94, and Asp-196.

Belongs to the RNase HII family. RnhC subfamily. Mn(2+) serves as cofactor. It depends on Mg(2+) as a cofactor.

The protein resides in the cytoplasm. It catalyses the reaction Endonucleolytic cleavage to 5'-phosphomonoester.. Its function is as follows. Endonuclease that specifically degrades the RNA of RNA-DNA hybrids. The sequence is that of Ribonuclease HIII from Exiguobacterium sibiricum (strain DSM 17290 / CCUG 55495 / CIP 109462 / JCM 13490 / 255-15).